The following is a 198-amino-acid chain: Na(+)-translocating NADH-quinone reductase subunit E (198 aa).

6 helical membrane passes run 11-31 (SIFI…FLAV), 40-60 (GLGI…NLVF), 77-97 (FLGF…LEMF), 110-130 (GIFL…SFMV), 140-160 (VVYG…MAAI), and 176-196 (LGIT…FSGI).

It belongs to the NqrDE/RnfAE family. Composed of six subunits; NqrA, NqrB, NqrC, NqrD, NqrE and NqrF.

The protein localises to the cell inner membrane. It carries out the reaction a ubiquinone + n Na(+)(in) + NADH + H(+) = a ubiquinol + n Na(+)(out) + NAD(+). Functionally, NQR complex catalyzes the reduction of ubiquinone-1 to ubiquinol by two successive reactions, coupled with the transport of Na(+) ions from the cytoplasm to the periplasm. NqrA to NqrE are probably involved in the second step, the conversion of ubisemiquinone to ubiquinol. This is Na(+)-translocating NADH-quinone reductase subunit E from Tolumonas auensis (strain DSM 9187 / NBRC 110442 / TA 4).